Reading from the N-terminus, the 354-residue chain is 4-hydroxy-3-methylbut-2-en-1-yl diphosphate synthase (flavodoxin) (354 aa).

The [4Fe-4S] cluster site is built by Cys265, Cys268, Cys300, and Glu307.

It belongs to the IspG family. Requires [4Fe-4S] cluster as cofactor.

It carries out the reaction (2E)-4-hydroxy-3-methylbut-2-enyl diphosphate + oxidized [flavodoxin] + H2O + 2 H(+) = 2-C-methyl-D-erythritol 2,4-cyclic diphosphate + reduced [flavodoxin]. Its pathway is isoprenoid biosynthesis; isopentenyl diphosphate biosynthesis via DXP pathway; isopentenyl diphosphate from 1-deoxy-D-xylulose 5-phosphate: step 5/6. Functionally, converts 2C-methyl-D-erythritol 2,4-cyclodiphosphate (ME-2,4cPP) into 1-hydroxy-2-methyl-2-(E)-butenyl 4-diphosphate. This is 4-hydroxy-3-methylbut-2-en-1-yl diphosphate synthase (flavodoxin) from Hydrogenobaculum sp. (strain Y04AAS1).